The sequence spans 262 residues: Nurim (262 aa).

The Nuclear portion of the chain corresponds to 1-4 (MAPA). A helical transmembrane segment spans residues 5 to 28 (LLLVPAALASFVLAFGTGVEFVRF). Topologically, residues 29–58 (TSLRPLLGGIPESGGPDARHGWLAALQDRS) are perinuclear space. The chain crosses the membrane as a helical span at residues 59-80 (ILASLAWDLCLLLLFVVQHSLM). Residues 81-97 (ATEAVKAWTSRYFGVLQ) are Nuclear-facing. A helical membrane pass occupies residues 98-114 (RSLYVACTALALQLVMR). At 115–133 (YWEATPRGPVLWEARAEPW) the chain is on the perinuclear space side. A helical transmembrane segment spans residues 134 to 164 (ATWVPLLCFVLHVVSWLLIFSILLVFDYAEL). The Nuclear segment spans residues 165–191 (MGLKQVYYHVLGLGEPLSLKSPRALRL). A helical transmembrane segment spans residues 192-210 (FSHLRHPVCVELLTVLWVV). At 211–216 (PTLGTD) the chain is on the perinuclear space side. Residues 217–234 (RLLLALLFTLYLGLAHGL) form a helical membrane-spanning segment. Residues 235-262 (DQQDLRYLRSQLQRKLQLLSRPQDGEAE) are Nuclear-facing.

It belongs to the nurim family.

It is found in the nucleus inner membrane. This Rattus norvegicus (Rat) protein is Nurim (Nrm).